The following is a 233-amino-acid chain: Bcl-2-like protein 1 (233 aa).

The BH4 motif lies at 4 to 24 (SNRELVVDFLSYKLSQKGYSW). Residues 27–73 (FSDVEENRTEAPEETEPERETPSAINGNPSWHLADSPAVNGATGHSS) are disordered. Phosphoserine; by PLK3 is present on serine 49. Residue serine 62 is modified to Phosphoserine; by CDK1. Positions 86-100 (VKQALREAGDEFELR) match the BH3 motif. The BH1 motif lies at 129–148 (ELFRDGVNWGRIVAFFSFGG). Positions 180 to 195 (PWIQENGGWDTFVDLY) match the BH2 motif. Residues 210 to 226 (FNRWFLTGMTVAGVVLL) traverse the membrane as a helical segment.

Belongs to the Bcl-2 family. In terms of assembly, homodimer. Interacts with BCL2L11. Interacts with BAD. Interacts with PGAM5. Interacts with HEBP2. Interacts with p53/TP53 and BBC3; interaction with BBC3 disrupts the interaction with p53/TP53. Interacts with ATP5F1A and ATP5F1B; the interactions mediate the association of isoform Bcl-X(L) with the mitochondrial membrane ATP synthase F(1)F(0) ATP synthase. Interacts with VDAC1. Interacts with BCL2L11 (via BH3). Interacts with RNF183. Interacts with GIMAP3/IAN4 and GIMAP5/IAN5. Interacts with GIMAP5 and HSPA8/HSC70; the interaction between HSPA8 and BCL2L1 is impaired in the absence of GIMAP5. Interacts with isoform 4 of CLU; this interaction releases and activates BAX and promotes cell death. Forms heterodimers with BAX, BAK or BCL2; heterodimerization with BAX does not seem to be required for anti-apoptotic activity. Interacts with isoform 1 of SIVA1; the interaction inhibits the anti-apoptotic activity. Interacts with IKZF3. Interacts with RTL10/BOP. Interacts with DNM1L and CLTA; DNM1L and BCL2L1 isoform BCL-X(L) may form a complex in synaptic vesicles that also contains clathrin and MFF. Interacts (via the loop between motifs BH4 and BH3) with NLRP1 (via LRR repeats), but not with NLRP2, NLRP3, NLRP4, PYCARD, nor MEFV. Interacts with BECN1. Post-translationally, proteolytically cleaved by caspases during apoptosis. The cleaved protein, lacking the BH4 motif, has pro-apoptotic activity. In terms of processing, phosphorylated on Ser-62 by CDK1. This phosphorylation is partial in normal mitotic cells, but complete in G2-arrested cells upon DNA-damage, thus promoting subsequent apoptosis probably by triggering caspases-mediated proteolysis. Phosphorylated by PLK3, leading to regulate the G2 checkpoint and progression to cytokinesis during mitosis. Phosphorylation at Ser-49 appears during the S phase and G2, disappears rapidly in early mitosis during prometaphase, metaphase and early anaphase, and re-appears during telophase and cytokinesis. Ubiquitinated by RNF183 during prolonged ER stress, leading to degradation by the proteosome. In terms of tissue distribution, expressed in most tissues. Bcl-X(beta) is specifically expressed in cerebellum, heart, and thymus. In the ovary, the predominant form is Bcl-X(L), with a small but detectable level of Bcl-X(S).

It is found in the mitochondrion inner membrane. The protein resides in the mitochondrion outer membrane. It localises to the mitochondrion matrix. The protein localises to the cytoplasmic vesicle. Its subcellular location is the secretory vesicle. It is found in the synaptic vesicle membrane. The protein resides in the cytoplasm. It localises to the cytosol. The protein localises to the cytoskeleton. Its subcellular location is the microtubule organizing center. It is found in the centrosome. The protein resides in the nucleus membrane. In terms of biological role, potent inhibitor of cell death. Inhibits activation of caspases. Appears to regulate cell death by blocking the voltage-dependent anion channel (VDAC) by binding to it and preventing the release of the caspase activator, CYC1, from the mitochondrial membrane. Also acts as a regulator of G2 checkpoint and progression to cytokinesis during mitosis. Isoform Bcl-X(L) also regulates presynaptic plasticity, including neurotransmitter release and recovery, number of axonal mitochondria as well as size and number of synaptic vesicle clusters. During synaptic stimulation, increases ATP availability from mitochondria through regulation of mitochondrial membrane ATP synthase F(1)F(0) activity and regulates endocytic vesicle retrieval in hippocampal neurons through association with DMN1L and stimulation of its GTPase activity in synaptic vesicles. May attenuate inflammation impairing NLRP1-inflammasome activation, hence CASP1 activation and IL1B release. Its function is as follows. Isoform Bcl-X(S) promotes apoptosis. The sequence is that of Bcl-2-like protein 1 (Bcl2l1) from Rattus norvegicus (Rat).